The sequence spans 142 residues: Large ribosomal subunit protein uL11 (142 aa).

Belongs to the universal ribosomal protein uL11 family. In terms of assembly, part of the ribosomal stalk of the 50S ribosomal subunit. Interacts with L10 and the large rRNA to form the base of the stalk. L10 forms an elongated spine to which L12 dimers bind in a sequential fashion forming a multimeric L10(L12)X complex. In terms of processing, one or more lysine residues are methylated.

Forms part of the ribosomal stalk which helps the ribosome interact with GTP-bound translation factors. The protein is Large ribosomal subunit protein uL11 of Leptospira interrogans serogroup Icterohaemorrhagiae serovar copenhageni (strain Fiocruz L1-130).